The primary structure comprises 176 residues: uncharacterized protein (176 aa).

The N-terminal stretch at 1-20 (MIKKISIILITLFIIQLTKS) is a signal peptide. The interval 26 to 46 (NNNNNNNNNNNNNNNNNNNNN) is disordered. N120 carries N-linked (GlcNAc...) asparagine glycosylation.

This sequence belongs to the Dictyostelium gerABC family.

It is found in the secreted. This is an uncharacterized protein from Dictyostelium discoideum (Social amoeba).